The chain runs to 576 residues: Arginine--tRNA ligase (576 aa).

A 'HIGH' region motif is present at residues 122 to 132 (PNVAKEMHVGH).

The protein belongs to the class-I aminoacyl-tRNA synthetase family. As to quaternary structure, monomer.

It localises to the cytoplasm. It carries out the reaction tRNA(Arg) + L-arginine + ATP = L-arginyl-tRNA(Arg) + AMP + diphosphate. This is Arginine--tRNA ligase from Pectobacterium carotovorum subsp. carotovorum (strain PC1).